The following is a 123-amino-acid chain: Small ribosomal subunit protein uS12 (123 aa).

Aspartate 89 carries the post-translational modification 3-methylthioaspartic acid. Residues glycine 100 to lysine 123 form a disordered region. Positions glycine 113–lysine 123 are enriched in basic residues.

Belongs to the universal ribosomal protein uS12 family. As to quaternary structure, part of the 30S ribosomal subunit. Contacts proteins S8 and S17. May interact with IF1 in the 30S initiation complex.

Functionally, with S4 and S5 plays an important role in translational accuracy. In terms of biological role, interacts with and stabilizes bases of the 16S rRNA that are involved in tRNA selection in the A site and with the mRNA backbone. Located at the interface of the 30S and 50S subunits, it traverses the body of the 30S subunit contacting proteins on the other side and probably holding the rRNA structure together. The combined cluster of proteins S8, S12 and S17 appears to hold together the shoulder and platform of the 30S subunit. This chain is Small ribosomal subunit protein uS12, found in Pseudomonas aeruginosa (strain LESB58).